A 131-amino-acid polypeptide reads, in one-letter code: Small ribosomal subunit protein uS8 (131 aa).

Belongs to the universal ribosomal protein uS8 family. As to quaternary structure, part of the 30S ribosomal subunit. Contacts proteins S5 and S12.

In terms of biological role, one of the primary rRNA binding proteins, it binds directly to 16S rRNA central domain where it helps coordinate assembly of the platform of the 30S subunit. This is Small ribosomal subunit protein uS8 from Hamiltonella defensa subsp. Acyrthosiphon pisum (strain 5AT).